We begin with the raw amino-acid sequence, 99 residues long: PE family immunomodulator PE35 (99 aa).

The 90-residue stretch at 1 to 90 (MEKMSHDPIA…DVARTYSQID (90 aa)) folds into the PE domain.

This sequence belongs to the mycobacterial PE family. In terms of assembly, interacts with PPE68. PE35/PPE68 complex interacts with human TLR2.

It localises to the secreted. The protein localises to the cell surface. Plays a major role in RD1-associated pathogenesis, and may contribute to the establishment and maintenance of M.tuberculosis infection. Together with PPE68, stimulates the secretion of IL-10 and MCP-1 from human macrophages, via the interaction with human Toll-like receptor 2 (TLR2). The protein is PE family immunomodulator PE35 (PE35) of Mycobacterium tuberculosis (strain ATCC 25618 / H37Rv).